Here is a 58-residue protein sequence, read N- to C-terminus: Small ribosomal subunit protein bS21 (58 aa).

This sequence belongs to the bacterial ribosomal protein bS21 family.

The protein is Small ribosomal subunit protein bS21 of Picosynechococcus sp. (strain ATCC 27264 / PCC 7002 / PR-6) (Agmenellum quadruplicatum).